Reading from the N-terminus, the 130-residue chain is Phosphoribosyl-AMP cyclohydrolase (130 aa).

Asp77 is a binding site for Mg(2+). Cys78 lines the Zn(2+) pocket. Mg(2+) contacts are provided by Asp79 and Asp81. Zn(2+) is bound by residues Cys95 and Cys102.

The protein belongs to the PRA-CH family. Homodimer. Mg(2+) serves as cofactor. The cofactor is Zn(2+).

The protein resides in the cytoplasm. It carries out the reaction 1-(5-phospho-beta-D-ribosyl)-5'-AMP + H2O = 1-(5-phospho-beta-D-ribosyl)-5-[(5-phospho-beta-D-ribosylamino)methylideneamino]imidazole-4-carboxamide. It functions in the pathway amino-acid biosynthesis; L-histidine biosynthesis; L-histidine from 5-phospho-alpha-D-ribose 1-diphosphate: step 3/9. Functionally, catalyzes the hydrolysis of the adenine ring of phosphoribosyl-AMP. The polypeptide is Phosphoribosyl-AMP cyclohydrolase (Pseudomonas savastanoi pv. phaseolicola (strain 1448A / Race 6) (Pseudomonas syringae pv. phaseolicola (strain 1448A / Race 6))).